We begin with the raw amino-acid sequence, 292 residues long: 4-hydroxy-tetrahydrodipicolinate synthase (292 aa).

T45 lines the pyruvate pocket. The active-site Proton donor/acceptor is the Y133. The Schiff-base intermediate with substrate role is filled by K162. Position 204 (I204) interacts with pyruvate.

Belongs to the DapA family. As to quaternary structure, homotetramer; dimer of dimers.

It is found in the cytoplasm. The catalysed reaction is L-aspartate 4-semialdehyde + pyruvate = (2S,4S)-4-hydroxy-2,3,4,5-tetrahydrodipicolinate + H2O + H(+). The protein operates within amino-acid biosynthesis; L-lysine biosynthesis via DAP pathway; (S)-tetrahydrodipicolinate from L-aspartate: step 3/4. Functionally, catalyzes the condensation of (S)-aspartate-beta-semialdehyde [(S)-ASA] and pyruvate to 4-hydroxy-tetrahydrodipicolinate (HTPA). This chain is 4-hydroxy-tetrahydrodipicolinate synthase, found in Maridesulfovibrio salexigens (strain ATCC 14822 / DSM 2638 / NCIMB 8403 / VKM B-1763) (Desulfovibrio salexigens).